The following is a 296-amino-acid chain: Pre-mRNA-splicing factor CWC23 (296 aa).

The J domain maps to 14 to 86 (DLYKLLELNY…AKKAEYDQWV (73 aa)).

It belongs to the DnaJ family. As to quaternary structure, associated with the spliceosome.

Its subcellular location is the cytoplasm. The protein localises to the nucleus. Involved in pre-mRNA splicing. May be involved in endoplasmic reticulum-associated protein degradation (ERAD) and required for growth at low and high temperatures. In Candida glabrata (strain ATCC 2001 / BCRC 20586 / JCM 3761 / NBRC 0622 / NRRL Y-65 / CBS 138) (Yeast), this protein is Pre-mRNA-splicing factor CWC23 (CWC23).